Reading from the N-terminus, the 487-residue chain is mRNA cleavage and polyadenylation factor CLP1 (487 aa).

Residues Glu19, Lys59, and 134 to 139 (NSGKTT) each bind ATP.

It belongs to the Clp1 family. Clp1 subfamily. As to quaternary structure, component of a pre-mRNA cleavage factor complex. Interacts directly with PCF11.

The protein resides in the nucleus. Its function is as follows. Required for endonucleolytic cleavage during polyadenylation-dependent pre-mRNA 3'-end formation. In Laccaria bicolor (strain S238N-H82 / ATCC MYA-4686) (Bicoloured deceiver), this protein is mRNA cleavage and polyadenylation factor CLP1.